We begin with the raw amino-acid sequence, 385 residues long: ATP phosphoribosyltransferase regulatory subunit (385 aa).

Belongs to the class-II aminoacyl-tRNA synthetase family. HisZ subfamily. As to quaternary structure, heteromultimer composed of HisG and HisZ subunits.

Its subcellular location is the cytoplasm. It functions in the pathway amino-acid biosynthesis; L-histidine biosynthesis; L-histidine from 5-phospho-alpha-D-ribose 1-diphosphate: step 1/9. In terms of biological role, required for the first step of histidine biosynthesis. May allow the feedback regulation of ATP phosphoribosyltransferase activity by histidine. This Laribacter hongkongensis (strain HLHK9) protein is ATP phosphoribosyltransferase regulatory subunit.